The chain runs to 428 residues: 2,3-bisphosphoglycerate-independent phosphoglycerate mutase 2 (428 aa).

It belongs to the BPG-independent phosphoglycerate mutase family. A-PGAM subfamily.

It catalyses the reaction (2R)-2-phosphoglycerate = (2R)-3-phosphoglycerate. It participates in carbohydrate degradation; glycolysis; pyruvate from D-glyceraldehyde 3-phosphate: step 3/5. Its function is as follows. Catalyzes the interconversion of 2-phosphoglycerate and 3-phosphoglycerate. In Methanocaldococcus jannaschii (strain ATCC 43067 / DSM 2661 / JAL-1 / JCM 10045 / NBRC 100440) (Methanococcus jannaschii), this protein is 2,3-bisphosphoglycerate-independent phosphoglycerate mutase 2 (apgM2).